The sequence spans 378 residues: Long-chain-fatty-acid--luciferin-component ligase (378 aa).

Belongs to the LuxE family.

It catalyses the reaction a long-chain fatty acid + L-cysteinyl-[protein] + ATP = an S-(long-chain fatty acyl)-L-cysteinyl-[protein] + AMP + diphosphate. It functions in the pathway lipid metabolism; fatty acid reduction for biolumincescence. Its function is as follows. Acyl-protein synthetase activates tetradecanoic acid. It is a component of the fatty acid reductase complex responsible for converting tetradecanoic acid to the aldehyde which serves as substrate in the luciferase-catalyzed reaction. In Aliivibrio fischeri (Vibrio fischeri), this protein is Long-chain-fatty-acid--luciferin-component ligase.